A 308-amino-acid polypeptide reads, in one-letter code: Mitochondrial import receptor subunit TOM40B (308 aa).

The tract at residues 281-308 is required for mitochondrial targeting; sequence PLPVTLALGAFLNHWRNRFHCGFSITVG.

The protein belongs to the Tom40 family. Forms part of the preprotein translocase of the outer mitochondrial membrane (TOM complex) containing TOMM22, TOMM40, TOMM40L and TOMM70. Interacts with mitochondrial targeting sequences. As to expression, widely expressed. Higher levels in heart, brain and liver, very low level in testis.

The protein resides in the mitochondrion outer membrane. In terms of biological role, potential channel-forming protein implicated in import of protein precursors into mitochondria. This is Mitochondrial import receptor subunit TOM40B from Rattus norvegicus (Rat).